We begin with the raw amino-acid sequence, 80 residues long: UPF0291 protein YlaC (80 aa).

Belongs to the UPF0291 family.

The protein localises to the cytoplasm. The polypeptide is UPF0291 protein YlaC (ylcA) (Lactococcus lactis subsp. lactis (strain IL1403) (Streptococcus lactis)).